The primary structure comprises 306 residues: Probable cobalamin biosynthesis protein CobD (306 aa).

The next 6 membrane-spanning stretches (helical) occupy residues I17 to F37, L54 to I74, I88 to S108, I155 to F175, I207 to Y227, and S286 to M306.

It belongs to the CobD/CbiB family.

The protein resides in the cell membrane. It functions in the pathway cofactor biosynthesis; adenosylcobalamin biosynthesis. In terms of biological role, converts cobyric acid to cobinamide by the addition of aminopropanol on the F carboxylic group. In Methanococcus maripaludis (strain C5 / ATCC BAA-1333), this protein is Probable cobalamin biosynthesis protein CobD.